The following is a 338-amino-acid chain: Putative transport protein TM_1349 (338 aa).

The next 7 helical transmembrane spans lie at 20–40 (ILIS…IVLM), 68–88 (ALLL…PPVF), 147–167 (VSVT…VFYI), 203–223 (VIFI…EAFN), 239–259 (FIPI…SLTL), 263–283 (GVLL…VVFI), and 297–317 (IILS…FVGV).

The protein belongs to the autoinducer-2 exporter (AI-2E) (TC 2.A.86) family.

It is found in the cell membrane. The protein is Putative transport protein TM_1349 of Thermotoga maritima (strain ATCC 43589 / DSM 3109 / JCM 10099 / NBRC 100826 / MSB8).